The sequence spans 223 residues: Small ribosomal subunit protein uS3 (223 aa).

Residues 38–106 enclose the KH type-2 domain; that stretch reads IKKYLKSKLA…EVHLNIVEIR (69 aa).

The protein belongs to the universal ribosomal protein uS3 family. Part of the 30S ribosomal subunit. Forms a tight complex with proteins S10 and S14.

Binds the lower part of the 30S subunit head. Binds mRNA in the 70S ribosome, positioning it for translation. The chain is Small ribosomal subunit protein uS3 from Rhodospirillum rubrum (strain ATCC 11170 / ATH 1.1.1 / DSM 467 / LMG 4362 / NCIMB 8255 / S1).